Here is a 95-residue protein sequence, read N- to C-terminus: MRTLGLLLALLFLAAQTPAQLMGEEAEEATGRPEATEAQEAAAALMAARAADRHVTDPEQQRIITCSCRTFCFLGERISGRCYQSVFIYRLCCRG.

Residues 1–19 form the signal peptide; that stretch reads MRTLGLLLALLFLAAQTPA. The propeptide occupies 20 to 61; sequence QLMGEEAEEATGRPEATEAQEAAAALMAARAADRHVTDPEQQ. 3 disulfides stabilise this stretch: cysteine 66–cysteine 93, cysteine 68–cysteine 82, and cysteine 72–cysteine 92.

Belongs to the alpha-defensin family. In terms of tissue distribution, highly expressed in spleen, and expressed at lower levels in intestin and lung.

The protein resides in the secreted. Functionally, has antimicrobial activity. The sequence is that of Defensin-A3 from Ornithorhynchus anatinus (Duckbill platypus).